Reading from the N-terminus, the 429-residue chain is Glutamate-1-semialdehyde 2,1-aminomutase (429 aa).

At K268 the chain carries N6-(pyridoxal phosphate)lysine.

Belongs to the class-III pyridoxal-phosphate-dependent aminotransferase family. HemL subfamily. Homodimer. The cofactor is pyridoxal 5'-phosphate.

Its subcellular location is the cytoplasm. The catalysed reaction is (S)-4-amino-5-oxopentanoate = 5-aminolevulinate. It participates in porphyrin-containing compound metabolism; protoporphyrin-IX biosynthesis; 5-aminolevulinate from L-glutamyl-tRNA(Glu): step 2/2. In Serratia proteamaculans (strain 568), this protein is Glutamate-1-semialdehyde 2,1-aminomutase.